A 476-amino-acid chain; its full sequence is Chromosomal replication initiator protein DnaA (476 aa).

Residues 1–75 (MLAPDTFWLA…TQMAENHFAR (75 aa)) form a domain I, interacts with DnaA modulators region. The interval 75–139 (RPVQLQLELA…AKEKQEKNPT (65 aa)) is domain II. Residues 110–141 (FDAPTESAQKAPKDTKDTKDAKEKQEKNPTRL) are disordered. Positions 120 to 138 (APKDTKDTKDAKEKQEKNP) are enriched in basic and acidic residues. A domain III, AAA+ region region spans residues 140–356 (RLNPSFTFNT…GALKRVVAYS (217 aa)). Residues Gly-184, Gly-186, Lys-187, and Thr-188 each contribute to the ATP site. The tract at residues 357–476 (RFTGHALTLD…FNTLLHILRG (120 aa)) is domain IV, binds dsDNA.

This sequence belongs to the DnaA family. In terms of assembly, oligomerizes as a right-handed, spiral filament on DNA at oriC.

The protein resides in the cytoplasm. Functionally, plays an essential role in the initiation and regulation of chromosomal replication. ATP-DnaA binds to the origin of replication (oriC) to initiate formation of the DNA replication initiation complex once per cell cycle. Binds the DnaA box (a 9 base pair repeat at the origin) and separates the double-stranded (ds)DNA. Forms a right-handed helical filament on oriC DNA; dsDNA binds to the exterior of the filament while single-stranded (ss)DNA is stabiized in the filament's interior. The ATP-DnaA-oriC complex binds and stabilizes one strand of the AT-rich DNA unwinding element (DUE), permitting loading of DNA polymerase. After initiation quickly degrades to an ADP-DnaA complex that is not apt for DNA replication. Binds acidic phospholipids. The polypeptide is Chromosomal replication initiator protein DnaA (Nitrosospira multiformis (strain ATCC 25196 / NCIMB 11849 / C 71)).